A 1270-amino-acid chain; its full sequence is Myosin-binding protein C, cardiac-type (1270 aa).

N-acetylmethionine is present on Met-1. A disordered region spans residues Met-1–Gly-24. Phosphoserine is present on residues Ser-47 and Ser-72. Residues Val-94–Ser-105 show a composition bias toward basic and acidic residues. Positions Val-94–Ile-152 are disordered. Low complexity predominate over residues Glu-106 to Val-135. The Ig-like C2-type 1 domain occupies Pro-151–Val-254. Positions 206, 208, 221, and 223 each coordinate Zn(2+). Ser-273, Ser-282, and Ser-302 each carry phosphoserine; by PKA and PKC. Phosphoserine is present on residues Ser-307 and Ser-423. Ig-like C2-type domains follow at residues Ser-358–Pro-448, Pro-449–Lys-539, Lys-540–Glu-629, and Pro-641–Val-767. Cys-432 and Cys-439 are disulfide-bonded. Phosphoserine is present on residues Ser-455 and Ser-546. Thr-603 is modified (phosphothreonine). The interval Val-683 to Gly-702 is disordered. 2 consecutive Fibronectin type-III domains span residues Ala-770–Pro-866 and Glu-868–Ile-963. Positions Pro-967–Lys-1061 constitute an Ig-like C2-type 6 domain. Positions Pro-1064 to Pro-1159 constitute a Fibronectin type-III 3 domain. In terms of domain architecture, Ig-like C2-type 7 spans Pro-1177 to Gln-1270. Omega-N-methylarginine is present on Arg-1237.

It belongs to the immunoglobulin superfamily. MyBP family. In terms of processing, substrate for phosphorylation by PKA and PKC. Reversible phosphorylation appears to modulate contraction. Post-translationally, polyubiquitinated.

Functionally, thick filament-associated protein located in the crossbridge region of vertebrate striated muscle a bands. In vitro it binds MHC, F-actin and native thin filaments, and modifies the activity of actin-activated myosin ATPase. It may modulate muscle contraction or may play a more structural role. In Mus musculus (Mouse), this protein is Myosin-binding protein C, cardiac-type (Mybpc3).